A 120-amino-acid chain; its full sequence is Protein p14.5 (120 aa).

Disordered regions lie at residues 1–27 and 80–120; these read MADF…LEYD and REFT…HKSK. A2 bears the N-acetylalanine; by host mark. A compositionally biased stretch (basic residues) spans 103–120; it reads KPKKKKHLFPKLSSHKSK.

Belongs to the asfivirus structural protein p14.5 family. Interacts with the major capsid protein. Interacts with host IRF3; this interaction interferes with the recruitment of IRF3 to TBK1. Post-translationally, acetylated.

The protein resides in the virion. Functionally, structural protein required for transport of intracellular particles from the assembly sites to the plasma membrane. Binds to both ssDNA and dsDNA. Suppressed the activation of the cGAS/STING pathway by interfering with the recruitment of IRF3 to TBK1, which in turn suppresses IRF3 phosphorylation, decreasing interferon production. The chain is Protein p14.5 from Ornithodoros (relapsing fever ticks).